A 216-amino-acid chain; its full sequence is MOB kinase activator 3C (216 aa).

Cys-82, Cys-87, His-164, and His-169 together coordinate Zn(2+).

The protein belongs to the MOB1/phocein family.

Its function is as follows. May regulate the activity of kinases. This Homo sapiens (Human) protein is MOB kinase activator 3C (MOB3C).